Here is a 394-residue protein sequence, read N- to C-terminus: RAB6A-GEF complex partner protein 2 (394 aa).

This sequence belongs to the RGP1 family. Forms a complex with RIC1; the interaction enhances RAB6A GTPase activity. Interacts with RIC1. Interacts with RAB6A; the interaction is direct with a preference for RAB6A-GDP. Interacts with RAB33B.

It localises to the cytoplasm. The protein localises to the cytosol. The protein resides in the membrane. Functionally, the RIC1-RGP1 complex acts as a guanine nucleotide exchange factor (GEF), which activates RAB6A by exchanging bound GDP for free GTP and may thereby required for efficient fusion of endosome-derived vesicles with the Golgi compartment. The RIC1-RGP1 complex participates in the recycling of mannose-6-phosphate receptors. The polypeptide is RAB6A-GEF complex partner protein 2 (Bos taurus (Bovine)).